Here is a 299-residue protein sequence, read N- to C-terminus: ATP phosphoribosyltransferase (299 aa).

Belongs to the ATP phosphoribosyltransferase family. Long subfamily. Requires Mg(2+) as cofactor.

It is found in the cytoplasm. The enzyme catalyses 1-(5-phospho-beta-D-ribosyl)-ATP + diphosphate = 5-phospho-alpha-D-ribose 1-diphosphate + ATP. It participates in amino-acid biosynthesis; L-histidine biosynthesis; L-histidine from 5-phospho-alpha-D-ribose 1-diphosphate: step 1/9. Its activity is regulated as follows. Feedback inhibited by histidine. In terms of biological role, catalyzes the condensation of ATP and 5-phosphoribose 1-diphosphate to form N'-(5'-phosphoribosyl)-ATP (PR-ATP). Has a crucial role in the pathway because the rate of histidine biosynthesis seems to be controlled primarily by regulation of HisG enzymatic activity. The chain is ATP phosphoribosyltransferase from Campylobacter lari (strain RM2100 / D67 / ATCC BAA-1060).